The sequence spans 303 residues: MRLFNWRRQAVLNAMPLVKPDQVRTPWHEFWRRFRRQHMAMTAALFVILLIVVAIFARWIAPYDAENYFDYDNLNNGPSLQHWFGVDSLGRDIFSRVLVGAQISLAAGVFAVFIGVAIGTLLGLLAGYYEGWWDRLIMRICDVLFAFPGILLAIAVVAVLGSGIANVIIAVAIFSIPAFARLVRGNTLVLKQQTFIESARSIGASDMTILLRHILPGTVSSIVVFFTMRIGTSIISAASLSFLGLGAQPPTPEWGAMLNEARADMVIAPHVAVFPALAIFLTVLAFNLLGDGLRDALDPKIKG.

Transmembrane regions (helical) follow at residues 40–60 (AMTA…ARWI), 105–125 (LAAG…LGLL), 144–164 (LFAF…GSGI), 165–185 (ANVI…LVRG), 222–242 (IVVF…SLSF), and 266–286 (VIAP…VLAF). The 190-residue stretch at 101-290 (AQISLAAGVF…LTVLAFNLLG (190 aa)) folds into the ABC transmembrane type-1 domain.

The protein belongs to the binding-protein-dependent transport system permease family. In terms of assembly, the complex is composed of two ATP-binding proteins (GsiA), two transmembrane proteins (GsiC and GsiD) and a solute-binding protein (GsiB).

Its subcellular location is the cell inner membrane. In terms of biological role, part of the ABC transporter complex GsiABCD involved in glutathione import. Probably responsible for the translocation of the substrate across the membrane. This is Glutathione transport system permease protein GsiD from Shigella flexneri serotype 5b (strain 8401).